Here is a 173-residue protein sequence, read N- to C-terminus: uncharacterized protein (173 aa).

In terms of domain architecture, N-acetyltransferase spans 2–171 (VTVREAKLED…PDLSALKTLL (170 aa)).

The protein belongs to the acetyltransferase family.

This is an uncharacterized protein from Bacillus subtilis (strain 168).